Consider the following 584-residue polypeptide: WD repeat-containing protein JIP5 (584 aa).

4 WD repeats span residues 128–173 (RHKG…GKVD), 180–219 (SAKD…GTNK), 269–314 (DQED…LADQ), and 378–415 (DAVD…DQEE). 2 disordered regions span residues 409-497 (YSDD…SEYI) and 516-563 (KKLI…EKKV). Composition is skewed to acidic residues over residues 412–429 (DQEE…EEDS) and 450–460 (FDSENNDDGEE). 2 stretches are compositionally biased toward basic and acidic residues: residues 483–493 (TRNEENKDNTK) and 528–552 (SKKE…EVPQ).

It belongs to the WD repeat WDR55 family.

Its subcellular location is the nucleus. It is found in the nucleolus. This chain is WD repeat-containing protein JIP5 (JIP5), found in Lodderomyces elongisporus (strain ATCC 11503 / CBS 2605 / JCM 1781 / NBRC 1676 / NRRL YB-4239) (Yeast).